Here is a 131-residue protein sequence, read N- to C-terminus: MISDPIADMLTRIRNGVMARHEVVIMPASRMKQYLAKVMKQEGFIAGYEVIGAKPKRQLKIVLRYDEGGASFVSGLERISKPGLRVYVQRGEIPRVYGGLGVAIVSTSKGVMTGSQAWRQGLGGELLCKVW.

This sequence belongs to the universal ribosomal protein uS8 family. In terms of assembly, part of the 30S ribosomal subunit. Contacts proteins S5 and S12.

In terms of biological role, one of the primary rRNA binding proteins, it binds directly to 16S rRNA central domain where it helps coordinate assembly of the platform of the 30S subunit. The protein is Small ribosomal subunit protein uS8 of Dehalococcoides mccartyi (strain CBDB1).